The primary structure comprises 114 residues: T cell receptor beta variable 6-9 (114 aa).

The N-terminal stretch at 1-21 (MSIGLLCCVAFSLLWAGPVNA) is a signal peptide. An Ig-like domain is found at 22 to 114 (GVTQTPKFHI…TSVYFCASSY (93 aa)). Cysteine 42 and cysteine 110 are joined by a disulfide. A glycan (N-linked (GlcNAc...) asparagine) is linked at asparagine 84.

Alpha-beta TR is a heterodimer composed of an alpha and beta chain; disulfide-linked. The alpha-beta TR is associated with the transmembrane signaling CD3 coreceptor proteins to form the TR-CD3 (TcR or TCR). The assembly of alpha-beta TR heterodimers with CD3 occurs in the endoplasmic reticulum where a single alpha-beta TR heterodimer associates with one CD3D-CD3E heterodimer, one CD3G-CD3E heterodimer and one CD247 homodimer forming a stable octameric structure. CD3D-CD3E and CD3G-CD3E heterodimers preferentially associate with TR alpha and TR beta chains, respectively. The association of the CD247 homodimer is the last step of TcR assembly in the endoplasmic reticulum and is required for transport to the cell surface.

The protein localises to the cell membrane. In terms of biological role, v region of the variable domain of T cell receptor (TR) beta chain that participates in the antigen recognition. Alpha-beta T cell receptors are antigen specific receptors which are essential to the immune response and are present on the cell surface of T lymphocytes. Recognize peptide-major histocompatibility (MH) (pMH) complexes that are displayed by antigen presenting cells (APC), a prerequisite for efficient T cell adaptive immunity against pathogens. Binding of alpha-beta TR to pMH complex initiates TR-CD3 clustering on the cell surface and intracellular activation of LCK that phosphorylates the ITAM motifs of CD3G, CD3D, CD3E and CD247 enabling the recruitment of ZAP70. In turn ZAP70 phosphorylates LAT, which recruits numerous signaling molecules to form the LAT signalosome. The LAT signalosome propagates signal branching to three major signaling pathways, the calcium, the mitogen-activated protein kinase (MAPK) kinase and the nuclear factor NF-kappa-B (NF-kB) pathways, leading to the mobilization of transcription factors that are critical for gene expression and essential for T cell growth and differentiation. The T cell repertoire is generated in the thymus, by V-(D)-J rearrangement. This repertoire is then shaped by intrathymic selection events to generate a peripheral T cell pool of self-MH restricted, non-autoaggressive T cells. Post-thymic interaction of alpha-beta TR with the pMH complexes shapes TR structural and functional avidity. The polypeptide is T cell receptor beta variable 6-9 (Homo sapiens (Human)).